The primary structure comprises 20 residues: Cytosol aminopeptidase (20 aa).

The residue at position 6 (serine 6) is a Phosphoserine.

This sequence belongs to the peptidase M17 family. Homohexamer. Zn(2+) serves as cofactor. It depends on Mn(2+) as a cofactor.

It is found in the cytoplasm. It catalyses the reaction Release of an N-terminal amino acid, Xaa-|-Yaa-, in which Xaa is preferably Leu, but may be other amino acids including Pro although not Arg or Lys, and Yaa may be Pro. Amino acid amides and methyl esters are also readily hydrolyzed, but rates on arylamides are exceedingly low.. It carries out the reaction an S-substituted L-cysteinylglycine + H2O = an S-substituted L-cysteine + glycine. The enzyme catalyses L-cysteinylglycine + H2O = L-cysteine + glycine. The catalysed reaction is S-benzyl-L-cysteinylglycine + H2O = S-benzyl-L-cysteine + glycine. It catalyses the reaction Release of N-terminal proline from a peptide.. Functionally, cytosolic metallopeptidase that catalyzes the removal of unsubstituted N-terminal hydrophobic amino acids from various peptides. The presence of Zn(2+) ions is essential for the peptidase activity, and the association with other cofactors can modulate the substrate spectificity of the enzyme. For instance, in the presence of Mn(2+), it displays a specific Cys-Gly hydrolyzing activity of Cys-Gly-S-conjugates. Involved in the metabolism of glutathione and in the degradation of glutathione S-conjugates, which may play a role in the control of the cell redox status. The chain is Cytosol aminopeptidase from Mesocricetus auratus (Golden hamster).